A 710-amino-acid polypeptide reads, in one-letter code: Low-temperature-induced 78 kDa protein (710 aa).

Disordered regions lie at residues 1 to 198 (MDQT…LDGQ), 225 to 269 (YQSK…RDLS), and 305 to 507 (GFGD…STYT). Over residues 14–25 (QHPEEVEHHENG) the composition is skewed to basic and acidic residues. The segment covering 29-41 (MFRKVKARAKKFK) has biased composition (basic residues). The segment covering 49–58 (QSNEHEQDHD) has biased composition (basic and acidic residues). Residues 59-73 (LVEEDDDDDELEPEV) show a composition bias toward acidic residues. Residues 138–168 (SDKEEKRDVPIHHPLSELSDREESRETHHES) show a composition bias toward basic and acidic residues. The span at 169 to 187 (LNTPVSLLSGTEDVTSTFA) shows a compositional bias: polar residues. Repeat copies occupy residues 303-316 (PVGF…ELEK), 317-331 (DFPT…KTET), 336-350 (NSPS…KTES), 357-370 (PMGF…ELEK), and 398-412 (NFPV…KNES). The segment at 303 to 370 (PVGFGDESGA…GSESGAELEK (68 aa)) is 2 X 14 AA repeats of P-[MV]-G-F-G-[DS]-E-S-G-A-E-L-E-K. Composition is skewed to basic and acidic residues over residues 313–331 (ELEK…KTET), 340–352 (RSHE…ESGN), 367–380 (ELEK…DSGR), 402–418 (RSHE…DKDV), 442–466 (EDKF…KTET), and 475–487 (SHPK…KESR). Positions 317 to 412 (DFPTRSHDFD…SHELDLKNES (96 aa)) are 3 X 15 AA repeats of [DN]-[FS]-P-[STV]-R-S-H-[DE]-[FL]-D-[LM]-K-[NT]-E-[ST]. 3 repeat units span residues 510 to 514 (FASML), 532 to 536 (VDEKL), and 550 to 554 (VTTKL). Residues 510-600 (FASMLGYSGE…AFSDMVAEKL (91 aa)) form a 5 X 5 AA repeats of [FV]-[ADT]-[EST]-[KM]-L region. A disordered region spans residues 537-577 (TPVNEKDQETESAVTTKLPISGGGSGVEEQRGEDKSVSGRD). Positions 564-577 (EEQRGEDKSVSGRD) are enriched in basic and acidic residues. 2 repeat units span residues 579 to 583 (VAEKL) and 596 to 600 (VAEKL). The disordered stretch occupies residues 601-710 (QIGGEEEKKE…STVVPVQKEL (110 aa)). Positions 605-626 (EEEKKETTTKEVEKISTEKAAS) are enriched in basic and acidic residues. Serine 626 bears the Phosphoserine mark. Residues 638-654 (GGGGMVGRIKGWFGGGA) are compositionally biased toward gly residues. 2 repeat units span residues 648–670 (GWFG…EEAP) and 674–696 (GWFG…EESP). The segment at 648–696 (GWFGGGATDEVKPESPHSVEEAPKSSGWFGGGATEEVKPKSPHSVEESP) is 2 X 23 AA repeats. 2 stretches are compositionally biased toward basic and acidic residues: residues 656 to 670 (DEVK…EEAP) and 682 to 693 (EEVKPKSPHSVE).

The protein belongs to the LTI78/LTI65 family. As to expression, accumulates rapidly in leaves, stems, roots, flower petals, filaments, and sepals during cold-acclimation.

It is found in the cytoplasm. Involved in responses to abiotic stresses. Regulates probably root elongation in cold conditions. In Arabidopsis thaliana (Mouse-ear cress), this protein is Low-temperature-induced 78 kDa protein.